Consider the following 287-residue polypeptide: Myoblast determination protein 1 homolog B (287 aa).

Residues 96-147 (DRRRAATMRERRRLSKVNDAFETLKRCTSTNPNQRLPKVDILRNAISYIDSL) form the bHLH domain. 2 disordered regions span residues 161–202 (NMEH…FYTD) and 231–277 (QSPS…QLSH). Positions 168–188 (DSDASSPSSNCSDGMNSPPCS) are enriched in low complexity. Polar residues predominate over residues 267 to 277 (SPGNSCTQLSH).

As to quaternary structure, efficient DNA binding requires dimerization with another bHLH protein.

It is found in the nucleus. In terms of biological role, may act as a transcriptional activator that promotes transcription of muscle-specific target genes and plays a role in muscle differentiation. This Xenopus laevis (African clawed frog) protein is Myoblast determination protein 1 homolog B (myod1-b).